We begin with the raw amino-acid sequence, 472 residues long: 4-O-methyl-glucuronoyl methylesterase 1 (472 aa).

A signal peptide spans 1-20 (MKSAAYLAALAAVLPAYVNA). Residues 21-56 (QAQEWGQCGGIGWTGATTCVSGTVCTVLNPYYSQCL) form the CBM1 domain. The tract at residues 62 to 97 (TAPPPPPPPPTSVSSSSSSSTSSAPPSGPSGTSPTC) is disordered. Positions 63 to 72 (APPPPPPPPT) are enriched in pro residues. The segment covering 73–96 (SVSSSSSSSTSSAPPSGPSGTSPT) has biased composition (low complexity). 3 disulfide bridges follow: Cys-97-Cys-131, Cys-283-Cys-419, and Cys-315-Cys-391. Positions 282–287 (GCSRDG) match the GXSYXG catalytic site motif motif. The active-site Nucleophile is Ser-284. Residues Lys-288, Gln-330, Glu-338, and Trp-382 each contribute to the substrate site. His-418 serves as the catalytic Proton donor/acceptor. The N-linked (GlcNAc...) asparagine glycan is linked to Asn-465.

The protein belongs to the carbohydrate esterase 15 (CE15) family.

It localises to the secreted. The catalysed reaction is a 4-O-methyl-alpha-D-glucuronosyl ester derivative + H2O = 4-O-methyl-alpha-D-glucuronate derivative + an alcohol + H(+). Its function is as follows. Glucuronoyl esterase which may play a significant role in biomass degradation, as it is considered to disconnect hemicellulose from lignin through the hydrolysis of the ester bond between 4-O-methyl-D-glucuronic acid residues of glucuronoxylans and aromatic alcohols of lignin. Can hydrolyze benzyl glucuronic acid (BnGlcA), allyl glucuronic acid (allylGlcA) and to a lower degree methyl glucuronic acid (MeGlcA) in vitro. This chain is 4-O-methyl-glucuronoyl methylesterase 1, found in Phanerochaete chrysosporium (strain RP-78 / ATCC MYA-4764 / FGSC 9002) (White-rot fungus).